The chain runs to 265 residues: Putative Tubby-like protein 4 (265 aa).

An F-box domain is found at 1–44 (MPPELLRDVLMRIERSEDTWPSRKNVVSCVGVCKNWRQIFKEIV). In terms of domain architecture, FBD spans 228–250 (SYELKLALYFAKNSAILKKFVLR).

This sequence belongs to the TUB family.

This is Putative Tubby-like protein 4 from Arabidopsis thaliana (Mouse-ear cress).